Consider the following 380-residue polypeptide: RNA binding protein fox-1 homolog 2 (380 aa).

Composition is skewed to polar residues over residues Met1 to Thr20 and Asn36 to Glu56. Positions Met1–Ile117 are disordered. The segment covering Ser72–Asn102 has biased composition (low complexity). The RRM domain occupies Lys110–Ala186.

It localises to the nucleus. The protein resides in the cytoplasm. Its function is as follows. RNA-binding protein that regulates alternative splicing events by binding to 5'-UGCAUGU-3' elements. Regulates alternative splicing of tissue-specific exons. In Xenopus tropicalis (Western clawed frog), this protein is RNA binding protein fox-1 homolog 2 (rbfox2).